The following is a 514-amino-acid chain: Putative transposase y4uI (514 aa).

The HTH IS408-type domain occupies 11–93 (VREILKLRLD…PDWSAVAREL (83 aa)). The Integrase catalytic domain occupies 128–317 (HGRLPLVMRQ…TRRALFDELD (190 aa)).

It belongs to the transposase IS21/IS408/IS1162 family.

The protein is Putative transposase y4uI of Sinorhizobium fredii (strain NBRC 101917 / NGR234).